The following is a 394-amino-acid chain: Protein TsgA homolog (394 aa).

Helical transmembrane passes span 11–31, 51–71, 76–96, 101–121, 134–154, 162–182, 206–226, 251–271, 274–294, 302–322, 334–354, and 363–383; these read WISYFSYALTGALVIVTGMVM, FLNAGILISIFLNAWLMEIIP, LMFGFVLMVLAIAGLMLGKSL, LCMFILGVVSGITMSIGTFLI, LLFTDSFFSMAGMIFPIVAAM, WYWVYACIGLLYVGIFVLTLF, IGVLFLSIAALCYILGQLGFI, FWTSYMIGMWVFSFILRFFDL, IVTILAALATGAMYLFVSTDN, IMALGFVSSAIYTTLITLGSL, FILTCGTIGTMLTFVVTGPIV, and LTTANGLYLAVFVMCLLLGFV.

Belongs to the major facilitator superfamily. TsgA family.

It is found in the cell inner membrane. In Serratia proteamaculans (strain 568), this protein is Protein TsgA homolog.